A 224-amino-acid polypeptide reads, in one-letter code: Urease accessory protein UreF (224 aa).

It belongs to the UreF family. As to quaternary structure, ureD, UreF and UreG form a complex that acts as a GTP-hydrolysis-dependent molecular chaperone, activating the urease apoprotein by helping to assemble the nickel containing metallocenter of UreC. The UreE protein probably delivers the nickel.

The protein resides in the cytoplasm. Its function is as follows. Required for maturation of urease via the functional incorporation of the urease nickel metallocenter. The polypeptide is Urease accessory protein UreF (Pseudomonas savastanoi pv. phaseolicola (strain 1448A / Race 6) (Pseudomonas syringae pv. phaseolicola (strain 1448A / Race 6))).